We begin with the raw amino-acid sequence, 216 residues long: 2',3'-cyclic-nucleotide 3'-phosphodiesterase (216 aa).

Histidine 39 functions as the Proton donor/acceptor in the catalytic mechanism. Threonine 41 serves as a coordination point for substrate. The active-site Proton donor/acceptor is the histidine 137. 2 residues coordinate substrate: serine 139 and tyrosine 142.

Belongs to the 2H phosphoesterase superfamily. CPD1 family.

It localises to the golgi apparatus. It carries out the reaction a nucleoside 2',3'-cyclic phosphate + H2O = a nucleoside 2'-phosphate + H(+). Its function is as follows. Involved in the metabolism of ADP-ribose 1',2'-cyclic phosphate which is produced as a consequence of tRNA splicing. This is 2',3'-cyclic-nucleotide 3'-phosphodiesterase (CPD1) from Eremothecium gossypii (strain ATCC 10895 / CBS 109.51 / FGSC 9923 / NRRL Y-1056) (Yeast).